We begin with the raw amino-acid sequence, 178 residues long: Fatty-acid and retinol-binding protein 1 (178 aa).

The N-terminal stretch at 1 to 16 (MYHRLILLALVGTTMA) is a signal peptide. 2 coiled-coil regions span residues 67–89 (DAAL…ELRN) and 130–153 (KQAA…ELKV).

This sequence belongs to the fatty-acid and retinol-binding protein (FARBP) family. Not glycosylated.

The protein localises to the secreted. Functionally, binds retinol and different fatty acids. The sequence is that of Fatty-acid and retinol-binding protein 1 from Brugia pahangi (Filarial nematode worm).